The sequence spans 1381 residues: Peroxisomal ATPase PEX6 (1381 aa).

Over residues 1 to 10 (MTAPNSTPAS) the composition is skewed to polar residues. Disordered stretches follow at residues 1 to 23 (MTAP…QDKP), 247 to 315 (VRTS…DNLS), 333 to 374 (TVTG…DRPR), and 467 to 499 (YSSR…NPPA). The span at 11–20 (SRKRVRRRRQ) shows a compositional bias: basic residues. Acidic residues-rich tracts occupy residues 270-284 (AEDD…AEED) and 296-315 (TDAD…DNLS). 3 stretches are compositionally biased toward polar residues: residues 333–345 (TVTG…TGTP), 355–367 (GPGS…TATT), and 487–499 (FFEA…NPPA). Residue 1031–1038 (GPPGTGKT) participates in ATP binding. Composition is skewed to basic and acidic residues over residues 1294–1305 (GAKDKDKKKEGA) and 1337–1350 (STKK…KAAD). A disordered region spans residues 1294-1381 (GAKDKDKKKE…GGDEDEGLYD (88 aa)). The span at 1372-1381 (GGDEDEGLYD) shows a compositional bias: acidic residues.

The protein belongs to the AAA ATPase family. In terms of assembly, interacts with PEX1; forming the PEX1-PEX6 AAA ATPase complex, which is composed of a heterohexamer formed by a trimer of PEX1-PEX6 dimers.

The protein resides in the cytoplasm. It is found in the cytosol. Its subcellular location is the peroxisome membrane. It catalyses the reaction ATP + H2O = ADP + phosphate + H(+). Functionally, component of the PEX1-PEX6 AAA ATPase complex, a protein dislocase complex that mediates the ATP-dependent extraction of the PEX5 receptor from peroxisomal membranes, an essential step for PEX5 recycling. Specifically recognizes PEX5 monoubiquitinated at 'Cys-6', and pulls it out of the peroxisome lumen through the PEX2-PEX10-PEX12 retrotranslocation channel. Extraction by the PEX1-PEX6 AAA ATPase complex is accompanied by unfolding of the TPR repeats and release of bound cargo from PEX5. The polypeptide is Peroxisomal ATPase PEX6 (pex-6) (Neurospora crassa (strain ATCC 24698 / 74-OR23-1A / CBS 708.71 / DSM 1257 / FGSC 987)).